Reading from the N-terminus, the 278-residue chain is MSVLRSTCLFFPPRSLLISFNKRRLFSTSRLILNKESETTKKKDKSKQQDFNPRHLGVAAEIFIPSAYKNLPNVFAHPLIVANALIRRLYTFGLNSVQVALFRFQSGIKPSFLLWKNKAIETYINVNTSFAHKNLSDIKGLVSLWVQEALEARSRQLPGNATLDWQLIKFNAVPKLVSVQPIMIPGMPLEHLQLVYKFDTKQRLIKVNQQTKKTETLDRDVVDYIAFLCDATTNDMILMGSLFESKPNDKLPKSYEDDAKVAIHRMKVNGDIYRLPPS.

The N-terminal 33 residues, 1 to 33, are a transit peptide targeting the mitochondrion; that stretch reads MSVLRSTCLFFPPRSLLISFNKRRLFSTSRLIL.

As to quaternary structure, interacts with OXA1 and MDM38. Binds to mitoribosomes in order to recruit them to the mitochondrial inner membrane.

The protein resides in the mitochondrion inner membrane. Mitochondrial inner membrane-associated mitoribosome receptor that spatially aligns the mitoribosome exit tunnel with the membrane insertion machinery and allows cotranslational protein membrane insertion. The polypeptide is Inner membrane mitoribosome receptor MBA1, mitochondrial (Saccharomyces cerevisiae (strain ATCC 204508 / S288c) (Baker's yeast)).